A 205-amino-acid polypeptide reads, in one-letter code: Large ribosomal subunit protein bL25 (205 aa).

The disordered stretch occupies residues 185 to 205 (PAGAVSEAAEGGEAAGETPAA). Over residues 186–205 (AGAVSEAAEGGEAAGETPAA) the composition is skewed to low complexity.

Belongs to the bacterial ribosomal protein bL25 family. CTC subfamily. In terms of assembly, part of the 50S ribosomal subunit; part of the 5S rRNA/L5/L18/L25 subcomplex. Contacts the 5S rRNA. Binds to the 5S rRNA independently of L5 and L18.

Functionally, this is one of the proteins that binds to the 5S RNA in the ribosome where it forms part of the central protuberance. This is Large ribosomal subunit protein bL25 from Cupriavidus taiwanensis (strain DSM 17343 / BCRC 17206 / CCUG 44338 / CIP 107171 / LMG 19424 / R1) (Ralstonia taiwanensis (strain LMG 19424)).